Consider the following 150-residue polypeptide: Troponin C, isotype gamma (150 aa).

The residue at position 1 (M1) is an N-acetylmethionine. 4 consecutive EF-hand domains span residues 7-42, 43-78, 83-118, and 119-150; these read EQLS…MGVK, ISEK…FLIE, ALKA…LDNR, and LTED…MMSG. Positions 56, 58, 60, 62, and 67 each coordinate Ca(2+). Ca(2+)-binding residues include D132, D134, S136, T138, and E143.

It belongs to the troponin C family.

Functionally, troponin is the central regulatory protein of striated muscle contraction. Tn consists of three components: Tn-I which is the inhibitor of actomyosin ATPase, Tn-T which contains the binding site for tropomyosin and Tn-C. The binding of calcium to Tn-C abolishes the inhibitory action of Tn on actin filaments. The protein is Troponin C, isotype gamma of Astacus leptodactylus (Turkish narrow-clawed crayfish).